Consider the following 813-residue polypeptide: ATP-dependent zinc metalloprotease FTSH 10, mitochondrial (813 aa).

Residues 1–86 (MIFSKLGSSL…FANPRLRRFF (86 aa)) constitute a mitochondrion transit peptide. Positions 93 to 129 (KKNYENYYPKDSKKAPKNEQKSESRDGSKKNENENAG) are disordered. Over residues 94–125 (KNYENYYPKDSKKAPKNEQKSESRDGSKKNEN) the composition is skewed to basic and acidic residues. Residues 139-157 (MLIPLMAIALILSTFSLGS) traverse the membrane as a helical segment. Residue 367–374 (GPPGTGKT) participates in ATP binding. Histidine 592 provides a ligand contact to Zn(2+). Glutamate 593 is an active-site residue. Zn(2+) is bound by residues histidine 596 and aspartate 668. Basic and acidic residues predominate over residues 764–790 (RPFKSGETTNYDRFKSGFEESEKESQK). The tract at residues 764-813 (RPFKSGETTNYDRFKSGFEESEKESQKESVPVKPVEDDGIPPLEPQVVPT) is disordered.

This sequence in the N-terminal section; belongs to the AAA ATPase family. In the C-terminal section; belongs to the peptidase M41 family. Requires Zn(2+) as cofactor.

It is found in the mitochondrion inner membrane. Functionally, probable ATP-dependent zinc metallopeptidase. Involved in the assembly and/or stability of the complexes I and V of the mitochondrial oxidative phosphorylation system. In Arabidopsis thaliana (Mouse-ear cress), this protein is ATP-dependent zinc metalloprotease FTSH 10, mitochondrial (FTSH10).